The primary structure comprises 82 residues: Protein transport protein SBH1 (82 aa).

A disordered region spans residues 1 to 36 (MSSPTPPGGQRTLQKRKQGSSQKVAASAPKKNTNSN). The Cytoplasmic segment spans residues 1–53 (MSSPTPPGGQRTLQKRKQGSSQKVAASAPKKNTNSNNSILKIYSDEATGLRVD). Residues 19-36 (GSSQKVAASAPKKNTNSN) show a composition bias toward polar residues. A helical transmembrane segment spans residues 54–74 (PLVVLFLAVGFIFSVVALHVI).

The protein belongs to the SEC61-beta family. As to quaternary structure, component of the heterotrimeric Sec61 complex, which is composed of SSH1, SBH1 and SSS1. Presumably three to four Sec61 heterotrimers assemble into an oligomeric ring with a central aqueous pore. In cotranslational ER import, the pore diameter varies from 9-15 A in a ribosome-free resting state to 40-60 A in a functional state when associated with the ribosome. The Sec61 complex is part of a channel-forming translocon complex whose composition seem to change dependent upon different functional states. During post-translational ER import the Sec61 complex associates with the Sec62/63 complex to form the Sec complex. SBH1 interacts OST2, OST4 and WBP1 components of the OT complex.

It is found in the endoplasmic reticulum membrane. In terms of biological role, part of the Sec61 complex, which is the major component of a channel-forming translocon complex that mediates protein translocation across the endoplasmic reticulum (ER). The functional states of the translocon complex include co- and post-translational ER import, cotranslational membrane protein integration and retrograde transport of misfolded proteins out of the ER. In the cotranslational pathway, ribosomes synthesizing presecretory proteins are targeted to the translocon by the cytosolic signal recognition particle (SRP) and its ER-localized receptor. The association of the Sec61 complex with the ribosome is mediated by the 28S rRNA of the large ribosomal subunit. SRP-independent post-translational translocation requires the association of additional factors, such as the Sec62/63 complex and KAR2. The sequence is that of Protein transport protein SBH1 (SBH1) from Saccharomyces cerevisiae (strain ATCC 204508 / S288c) (Baker's yeast).